We begin with the raw amino-acid sequence, 481 residues long: 6-phosphogluconate dehydrogenase, decarboxylating (481 aa).

NADP(+)-binding positions include 11-16 (GLAVMG), 34-36 (NRT), 76-78 (VKA), and N104. Substrate is bound by residues N104 and 130–132 (SGG). K184 serves as the catalytic Proton acceptor. 187 to 188 (HN) contacts substrate. E191 acts as the Proton donor in catalysis. Positions 192, 259, 286, 445, and 451 each coordinate substrate.

The protein belongs to the 6-phosphogluconate dehydrogenase family. As to quaternary structure, homodimer.

It carries out the reaction 6-phospho-D-gluconate + NADP(+) = D-ribulose 5-phosphate + CO2 + NADPH. The protein operates within carbohydrate degradation; pentose phosphate pathway; D-ribulose 5-phosphate from D-glucose 6-phosphate (oxidative stage): step 3/3. Catalyzes the oxidative decarboxylation of 6-phosphogluconate to ribulose 5-phosphate and CO(2), with concomitant reduction of NADP to NADPH. This Ceratitis capitata (Mediterranean fruit fly) protein is 6-phosphogluconate dehydrogenase, decarboxylating (Pgd).